We begin with the raw amino-acid sequence, 399 residues long: L-methionine gamma-lyase (399 aa).

Residues 59–61 (YTR) and 89–90 (GI) contribute to the pyridoxal 5'-phosphate site. Residue Y114 coordinates substrate. 209 to 211 (SAT) contacts pyridoxal 5'-phosphate. At K212 the chain carries N6-(pyridoxal phosphate)lysine. R376 lines the substrate pocket.

It belongs to the trans-sulfuration enzymes family. L-methionine gamma-lyase subfamily. In terms of assembly, homotetramer; dimer of active dimers. It depends on pyridoxal 5'-phosphate as a cofactor.

It catalyses the reaction L-methionine + H2O = methanethiol + 2-oxobutanoate + NH4(+). The catalysed reaction is L-homocysteine + H2O = 2-oxobutanoate + hydrogen sulfide + NH4(+) + H(+). Catalyzes the alpha,gamma-elimination of L-methionine to produce methanethiol, 2-oxobutanoate and ammonia; methanethiol (methyl mercaptan) is considered to be one of the main causes of the oral malodor in periodontal disease and may also play a role in the pathogenicity of P.gingivalis in that disease. Is also able to catalyze the alpha,gamma-elimination of L-homocysteine. The chain is L-methionine gamma-lyase from Porphyromonas gingivalis (strain ATCC BAA-308 / W83).